Here is a 572-residue protein sequence, read N- to C-terminus: Phosphoenolpyruvate-protein phosphotransferase (572 aa).

The Tele-phosphohistidine intermediate role is filled by His-191. Arg-298 and Arg-334 together coordinate phosphoenolpyruvate. The Mg(2+) site is built by Glu-433 and Asp-457. Phosphoenolpyruvate contacts are provided by residues 456 to 457 (ND) and Arg-467. The active-site Proton donor is the Cys-504.

It belongs to the PEP-utilizing enzyme family. Homodimer. Mg(2+) is required as a cofactor.

It localises to the cytoplasm. The catalysed reaction is L-histidyl-[protein] + phosphoenolpyruvate = N(pros)-phospho-L-histidyl-[protein] + pyruvate. Its function is as follows. General (non sugar-specific) component of the phosphoenolpyruvate-dependent sugar phosphotransferase system (sugar PTS). This major carbohydrate active-transport system catalyzes the phosphorylation of incoming sugar substrates concomitantly with their translocation across the cell membrane. Enzyme I transfers the phosphoryl group from phosphoenolpyruvate (PEP) to the phosphoryl carrier protein (HPr). The sequence is that of Phosphoenolpyruvate-protein phosphotransferase (ptsI) from Staphylococcus aureus (strain MRSA252).